The chain runs to 645 residues: 1,4-alpha-glucan branching enzyme GlgB (645 aa).

Aspartate 309 functions as the Nucleophile in the catalytic mechanism. Glutamate 352 serves as the catalytic Proton donor. Residues 619 to 645 form a disordered region; it reads VKTRKGSKKQDGSKTKVRSNVTSRGKR. The segment covering 636–645 has biased composition (polar residues); it reads RSNVTSRGKR.

Belongs to the glycosyl hydrolase 13 family. GlgB subfamily. As to quaternary structure, monomer.

It catalyses the reaction Transfers a segment of a (1-&gt;4)-alpha-D-glucan chain to a primary hydroxy group in a similar glucan chain.. It participates in glycan biosynthesis; glycogen biosynthesis. In terms of biological role, catalyzes the formation of the alpha-1,6-glucosidic linkages in glycogen by scission of a 1,4-alpha-linked oligosaccharide from growing alpha-1,4-glucan chains and the subsequent attachment of the oligosaccharide to the alpha-1,6 position. This Bacillus cereus (strain ATCC 14579 / DSM 31 / CCUG 7414 / JCM 2152 / NBRC 15305 / NCIMB 9373 / NCTC 2599 / NRRL B-3711) protein is 1,4-alpha-glucan branching enzyme GlgB.